A 465-amino-acid chain; its full sequence is Sushi repeat-containing protein SRPX2 (465 aa).

The first 23 residues, 1–23 (MASQLTQRGALFLLFFLTPAVTP), serve as a signal peptide directing secretion. 3 consecutive Sushi domains span residues 69–119 (ATCY…YCRQ), 120–178 (MRCH…VCVD), and 262–321 (RRCP…ICAP). 4 disulfides stabilise this stretch: Cys71–Cys105, Cys91–Cys117, Cys122–Cys163, and Cys149–Cys176. The HYR domain occupies 177-261 (VDIDPPKIRC…SCKFIVKVQV (85 aa)). Disulfide bonds link Cys264–Cys306 and Cys292–Cys319.

As to quaternary structure, forms homooligomers. Interacts with PLAUR (via the UPAR/Ly6 domains), ADAMTS4 and CTSB. Interacts with HGF; the interaction increases the mitogenic activity of HGF. Contains chondroitin sulfate chains. In terms of tissue distribution, expressed in neurons of the rolandic area of the brain (at protein level). Highly expressed in the brain, placenta, lung, trachea, uterus, adrenal gland, heart, ovary and placenta. Weakly expressed in the peripheral blood, brain and bone marrow. Expressed in numerous cancer cell lines and in gastrointestinal cancer cells. Higher levels found in colorectal cancers than in normal colonic mucosa.

The protein resides in the secreted. Its subcellular location is the cytoplasm. The protein localises to the cell surface. It is found in the synapse. Its function is as follows. Acts as a ligand for the urokinase plasminogen activator surface receptor. Plays a role in angiogenesis by inducing endothelial cell migration and the formation of vascular network (cords). Involved in cellular migration and adhesion. Increases the phosphorylation levels of FAK. Interacts with and increases the mitogenic activity of HGF. Promotes synapse formation. May have a role in the perisylvian region, critical for language and cognitive development. This Homo sapiens (Human) protein is Sushi repeat-containing protein SRPX2 (SRPX2).